We begin with the raw amino-acid sequence, 380 residues long: Cytochrome b (380 aa).

The next 4 membrane-spanning stretches (helical) occupy residues 34-54 (FGSLLGICLTTQILTGLLLAA), 78-99 (WLIRNLHANGASFFFICIYMHI), 114-134 (WNTGVILLLTLMATAFVGYVL), and 179-199 (FFTLHFLLPFMIMGLTLIHLT). H84 and H98 together coordinate heme b. 2 residues coordinate heme b: H183 and H197. An a ubiquinone-binding site is contributed by H202. The next 4 membrane-spanning stretches (helical) occupy residues 227 to 247 (LKDTLGFMLMFLPLMTLALFS), 289 to 309 (LGGVLALAASMLILFLAPLLH), 321 to 341 (LSQLLFWTLTANLLILTWVGS), and 348 to 368 (FIIIGQLASLTYFTILLILFP).

Belongs to the cytochrome b family. In terms of assembly, the cytochrome bc1 complex contains 11 subunits: 3 respiratory subunits (MT-CYB, CYC1 and UQCRFS1), 2 core proteins (UQCRC1 and UQCRC2) and 6 low-molecular weight proteins (UQCRH/QCR6, UQCRB/QCR7, UQCRQ/QCR8, UQCR10/QCR9, UQCR11/QCR10 and a cleavage product of UQCRFS1). This cytochrome bc1 complex then forms a dimer. The cofactor is heme b.

It localises to the mitochondrion inner membrane. In terms of biological role, component of the ubiquinol-cytochrome c reductase complex (complex III or cytochrome b-c1 complex) that is part of the mitochondrial respiratory chain. The b-c1 complex mediates electron transfer from ubiquinol to cytochrome c. Contributes to the generation of a proton gradient across the mitochondrial membrane that is then used for ATP synthesis. The chain is Cytochrome b (MT-CYB) from Balearica regulorum (Grey crowned-crane).